Here is a 126-residue protein sequence, read N- to C-terminus: Aspartate 1-decarboxylase (126 aa).

The active-site Schiff-base intermediate with substrate; via pyruvic acid is the serine 25. A Pyruvic acid (Ser) modification is found at serine 25. Threonine 57 serves as a coordination point for substrate. Tyrosine 58 acts as the Proton donor in catalysis. 73–75 provides a ligand contact to substrate; it reads GAA.

This sequence belongs to the PanD family. In terms of assembly, heterooctamer of four alpha and four beta subunits. Pyruvate is required as a cofactor. In terms of processing, is synthesized initially as an inactive proenzyme, which is activated by self-cleavage at a specific serine bond to produce a beta-subunit with a hydroxyl group at its C-terminus and an alpha-subunit with a pyruvoyl group at its N-terminus.

The protein resides in the cytoplasm. It catalyses the reaction L-aspartate + H(+) = beta-alanine + CO2. The protein operates within cofactor biosynthesis; (R)-pantothenate biosynthesis; beta-alanine from L-aspartate: step 1/1. Its function is as follows. Catalyzes the pyruvoyl-dependent decarboxylation of aspartate to produce beta-alanine. This Citrobacter koseri (strain ATCC BAA-895 / CDC 4225-83 / SGSC4696) protein is Aspartate 1-decarboxylase.